Here is a 345-residue protein sequence, read N- to C-terminus: Papain (345 aa).

An N-terminal signal peptide occupies residues 1-18 (MAMIPSISKLLFVAICLF). The propeptide at 19 to 133 (VYMGLSFGDF…EEVLNDGDVN (115 aa)) is activation peptide. Disulfide bonds link Cys155–Cys196, Cys189–Cys228, and Cys286–Cys333. The active site involves Cys158. Cys158 contributes to the E64 binding site. Cys158 serves as a coordination point for leupeptin. Active-site residues include His292 and Asn308.

It belongs to the peptidase C1 family.

The catalysed reaction is Hydrolysis of proteins with broad specificity for peptide bonds, but preference for an amino acid bearing a large hydrophobic side chain at the P2 position. Does not accept Val in P1'.. Its activity is regulated as follows. Repressed by the active-site-directed cysteine protease inhibitor E64 (L-trans-epoxysuccinyl-leucylamide-(4-guanido)-butane) produced by Aspergillus japonicus. Inhibited by the inhibitor of cysteine proteases from Trypanosoma brucei (TbICP, rhodesain) and Colocasia esculenta cv. Kaohsiung no. 1 (CeCPI, tarocystatin). Repressed by leupeptin, a peptidic cysteine, serine and threonine protease inhibitor. Its function is as follows. Cysteine proteinase with a high level of diversity in substrate specificity, an amino acid bearing a large hydrophobic side chain at the P2 position is preferred. This Carica papaya (Papaya) protein is Papain.